The sequence spans 261 residues: Homeobox protein ceh-33 (261 aa).

Residues 133 to 192 constitute a DNA-binding region (homeobox); sequence GEETSYCFRDKSRVLLRDWYCRNSYPSPREKRELAEKTHLTVTQVSNWFKNRRQRDRAGV.

The protein belongs to the SIX/Sine oculis homeobox family.

It localises to the nucleus. This is Homeobox protein ceh-33 (ceh-33) from Caenorhabditis elegans.